The following is a 166-amino-acid chain: NADH-quinone oxidoreductase subunit I (166 aa).

4Fe-4S ferredoxin-type domains lie at 57–87 and 97–126; these read LRRY…IESE and TRYD…VTPI. [4Fe-4S] cluster-binding residues include Cys67, Cys70, Cys73, Cys77, Cys106, Cys109, Cys112, and Cys116.

This sequence belongs to the complex I 23 kDa subunit family. In terms of assembly, NDH-1 is composed of 14 different subunits. Subunits NuoA, H, J, K, L, M, N constitute the membrane sector of the complex. It depends on [4Fe-4S] cluster as a cofactor.

The protein localises to the cell inner membrane. The enzyme catalyses a quinone + NADH + 5 H(+)(in) = a quinol + NAD(+) + 4 H(+)(out). Its function is as follows. NDH-1 shuttles electrons from NADH, via FMN and iron-sulfur (Fe-S) centers, to quinones in the respiratory chain. The immediate electron acceptor for the enzyme in this species is believed to be ubiquinone. Couples the redox reaction to proton translocation (for every two electrons transferred, four hydrogen ions are translocated across the cytoplasmic membrane), and thus conserves the redox energy in a proton gradient. This Legionella pneumophila (strain Lens) protein is NADH-quinone oxidoreductase subunit I.